We begin with the raw amino-acid sequence, 389 residues long: MKWMVVALVCLQLLEAKVTKVTLKKFKSIRENLREQGLLEDFLKTNHYDPAQKYHFGDFSVAYEPMAYMDASYFGEISIGTPPQNFLVLFDTGSSNLWVPSVYCQSQACTGHARFNPNQSSTYSTNGQTFSLQYGSGSLTGFFGYDTMTVQNIKVPHQEFGLSQNEPGTNFIYAQFDGIMGMAYPSLAMGGATTALQGMLQEGALTSPVFSFYLSNQQGSQNGGAVIFGGVDNSLYTGQIFWAPVTQELYWQIGVEEFLIGGQATGWCQQGCQAIVDTGTSLLTVPQQFMSALQQATGAQQDQYGQLAVNCNSIQSLPTLTFIINGVQFPLPPSAYVLNTNGYCFLGVEPTYLPSQNGQPLWILGDVFLRSYYSVYDMGNNRVGFATAA.

The first 16 residues, 1 to 16 (MKWMVVALVCLQLLEA), serve as a signal peptide directing secretion. Positions 17–59 (KVTKVTLKKFKSIRENLREQGLLEDFLKTNHYDPAQKYHFGDF) are cleaved as a propeptide — activation peptide. In terms of domain architecture, Peptidase A1 spans 73 to 386 (YFGEISIGTP…DMGNNRVGFA (314 aa)). The active site involves Asp91. 2 cysteine pairs are disulfide-bonded: Cys104/Cys109 and Cys268/Cys272. Residue Asp277 is part of the active site. A disulfide bond links Cys311 and Cys344.

The protein belongs to the peptidase A1 family.

Its subcellular location is the secreted. It catalyses the reaction More restricted specificity than pepsin A, but shows preferential cleavage at Tyr-|-Xaa bonds. High activity on hemoglobin.. Its function is as follows. Hydrolyzes a variety of proteins. This Suncus murinus (Asian house shrew) protein is Gastricsin (PGC).